The following is a 252-amino-acid chain: Phosphomannomutase (252 aa).

Residue Asp13 is the Nucleophile of the active site. Positions 13 and 15 each coordinate Mg(2+). The Proton donor/acceptor role is filled by Asp15. 6 residues coordinate alpha-D-mannose 1-phosphate: Arg22, Arg124, Arg135, Arg142, Ser180, and Asp182. 3 residues coordinate Mg(2+): Asp208, Tyr220, and Thr225.

This sequence belongs to the eukaryotic PMM family. As to quaternary structure, homodimer. Mg(2+) is required as a cofactor. As to expression, expressed in roots, leaves, stems and flowers.

It localises to the cytoplasm. It carries out the reaction alpha-D-mannose 1-phosphate = D-mannose 6-phosphate. The protein operates within nucleotide-sugar biosynthesis; GDP-alpha-D-mannose biosynthesis; alpha-D-mannose 1-phosphate from D-fructose 6-phosphate: step 2/2. Functionally, catalyzes the interconversion of mannose-6-phosphate to mannose-1-phosphate, the precursor for the synthesis of GDP-mannose. GDP-mannose is an essential sugar nucleotide for the synthesis of D-mannose-containing cell wall polysaccharides (galactomannans and glucomannans), glycolipids, glycoproteins and the antioxidant L-ascorbate. Involved in the biosynthesis of ascorbate and polysaccharides in response to abiotic stress during seed germination. This chain is Phosphomannomutase, found in Dendrobium officinale (Orchid).